Here is a 116-residue protein sequence, read N- to C-terminus: Large ribosomal subunit protein bL19 (116 aa).

It belongs to the bacterial ribosomal protein bL19 family.

In terms of biological role, this protein is located at the 30S-50S ribosomal subunit interface and may play a role in the structure and function of the aminoacyl-tRNA binding site. In Staphylococcus saprophyticus subsp. saprophyticus (strain ATCC 15305 / DSM 20229 / NCIMB 8711 / NCTC 7292 / S-41), this protein is Large ribosomal subunit protein bL19.